A 324-amino-acid polypeptide reads, in one-letter code: Zinc finger C2HC domain-containing protein 1A (324 aa).

Residues 15-44 (DLLPCKICGRTFFPLALKKHGPICQKTATK) form a C2HC/C3H-type 1 zinc finger. Positions 19, 22, 34, and 38 each coordinate Zn(2+). Positions 43–83 (TKKRKTFDSSRQRAEGTDIPTVKPLKPRPEPPKKPSNWRRK) are disordered. Residues 48 to 58 (TFDSSRQRAEG) are compositionally biased toward basic and acidic residues. The C2HC/C3H-type 2 zinc finger occupies 118 to 147 (DYIQCPYCQRRFNENAADRHINFCKEQAAR). The Zn(2+) site is built by Cys-122, Cys-125, His-137, and Cys-141. A disordered region spans residues 149–225 (SNKGKFSTDS…NKPQTLSPSH (77 aa)). Low complexity predominate over residues 176-187 (SNPPGIPSSGSS). Composition is skewed to polar residues over residues 188-198 (RLPQPSTTSKT) and 206-223 (KASS…TLSP). Phosphoserine is present on Ser-222. Thr-243 bears the Phosphothreonine mark. Position 291 is a phosphoserine (Ser-291).

This sequence belongs to the ZC2HC1 family. The cofactor is Zn(2+).

This chain is Zinc finger C2HC domain-containing protein 1A (Zc2hc1a), found in Mus musculus (Mouse).